The chain runs to 774 residues: Probable E3 ubiquitin-protein ligase HECTD2 (774 aa).

The tract at residues 1–51 (MSEAARDLSPGAPPAVAAAAPEERKGKEPEREKLPPIVTAGAAAGLDRGSK) is disordered. S9 is modified (phosphoserine). Basic and acidic residues predominate over residues 21–34 (PEERKGKEPEREKL). The HECT domain maps to 435–774 (KRADLKKKLK…ISNSEGFGLE (340 aa)). C742 functions as the Glycyl thioester intermediate in the catalytic mechanism.

The enzyme catalyses S-ubiquitinyl-[E2 ubiquitin-conjugating enzyme]-L-cysteine + [acceptor protein]-L-lysine = [E2 ubiquitin-conjugating enzyme]-L-cysteine + N(6)-ubiquitinyl-[acceptor protein]-L-lysine.. Its pathway is protein modification; protein ubiquitination. Functionally, E3 ubiquitin-protein ligase which accepts ubiquitin from an E2 ubiquitin-conjugating enzyme in the form of a thioester and then directly transfers the ubiquitin to targeted substrates. In Mus musculus (Mouse), this protein is Probable E3 ubiquitin-protein ligase HECTD2 (Hectd2).